The primary structure comprises 159 residues: Cyclic pyranopterin monophosphate synthase (159 aa).

Residues 75–77 and 113–114 contribute to the substrate site; these read LCH and ME. D128 is a catalytic residue.

It belongs to the MoaC family. As to quaternary structure, homohexamer; trimer of dimers.

The catalysed reaction is (8S)-3',8-cyclo-7,8-dihydroguanosine 5'-triphosphate = cyclic pyranopterin phosphate + diphosphate. Its pathway is cofactor biosynthesis; molybdopterin biosynthesis. Functionally, catalyzes the conversion of (8S)-3',8-cyclo-7,8-dihydroguanosine 5'-triphosphate to cyclic pyranopterin monophosphate (cPMP). This chain is Cyclic pyranopterin monophosphate synthase, found in Cupriavidus metallidurans (strain ATCC 43123 / DSM 2839 / NBRC 102507 / CH34) (Ralstonia metallidurans).